Here is a 303-residue protein sequence, read N- to C-terminus: Oxygen-dependent coproporphyrinogen-III oxidase (303 aa).

Ser-93 serves as a coordination point for substrate. Residues His-97 and His-107 each contribute to the a divalent metal cation site. Catalysis depends on His-107, which acts as the Proton donor. 109-111 (NVR) lines the substrate pocket. The a divalent metal cation site is built by His-146 and His-176. Positions 241–276 (YVEFNLVYDRGTLFGLQSGGRTESILMSLPPQVRWG) are important for dimerization. A substrate-binding site is contributed by 259–261 (GGR).

The protein belongs to the aerobic coproporphyrinogen-III oxidase family. As to quaternary structure, homodimer. A divalent metal cation is required as a cofactor.

The protein localises to the cytoplasm. The enzyme catalyses coproporphyrinogen III + O2 + 2 H(+) = protoporphyrinogen IX + 2 CO2 + 2 H2O. It functions in the pathway porphyrin-containing compound metabolism; protoporphyrin-IX biosynthesis; protoporphyrinogen-IX from coproporphyrinogen-III (O2 route): step 1/1. Involved in the heme biosynthesis. Catalyzes the aerobic oxidative decarboxylation of propionate groups of rings A and B of coproporphyrinogen-III to yield the vinyl groups in protoporphyrinogen-IX. This Pseudomonas putida (strain GB-1) protein is Oxygen-dependent coproporphyrinogen-III oxidase.